The primary structure comprises 97 residues: Small ribosomal subunit protein bS20 (97 aa).

The protein belongs to the bacterial ribosomal protein bS20 family.

Binds directly to 16S ribosomal RNA. The chain is Small ribosomal subunit protein bS20 from Prochlorococcus marinus (strain AS9601).